The sequence spans 194 residues: Interferon alpha (194 aa).

A signal peptide spans Met1–Gly23. Cystine bridges form between Cys24–Cys123 and Cys52–Cys166. The N-linked (GlcNAc...) asparagine glycan is linked to Asn102.

The protein belongs to the alpha/beta interferon family.

It is found in the secreted. Produced by macrophages, IFN-alpha have antiviral activities. Interferon stimulates the production of two enzymes: a protein kinase and an oligoadenylate synthetase. This chain is Interferon alpha, found in Felis catus (Cat).